An 820-amino-acid chain; its full sequence is Leucine--tRNA ligase (820 aa).

The 'HIGH' region motif lies at 42-52 (PYPSGDLHMGH). The short motif at 576–580 (KMSKS) is the 'KMSKS' region element. An ATP-binding site is contributed by K579.

It belongs to the class-I aminoacyl-tRNA synthetase family.

The protein localises to the cytoplasm. It carries out the reaction tRNA(Leu) + L-leucine + ATP = L-leucyl-tRNA(Leu) + AMP + diphosphate. This Coxiella burnetii (strain RSA 493 / Nine Mile phase I) protein is Leucine--tRNA ligase.